Here is a 264-residue protein sequence, read N- to C-terminus: S-adenosylmethionine decarboxylase proenzyme (264 aa).

Residue Ser-112 is the Schiff-base intermediate with substrate; via pyruvic acid of the active site. Ser-112 carries the pyruvic acid (Ser); by autocatalysis modification. The active-site Proton acceptor; for processing activity is the His-117. The active-site Proton donor; for catalytic activity is the Cys-140.

The protein belongs to the prokaryotic AdoMetDC family. Type 2 subfamily. Heterooctamer of four alpha and four beta chains arranged as a tetramer of alpha/beta heterodimers. It depends on pyruvate as a cofactor. Post-translationally, is synthesized initially as an inactive proenzyme. Formation of the active enzyme involves a self-maturation process in which the active site pyruvoyl group is generated from an internal serine residue via an autocatalytic post-translational modification. Two non-identical subunits are generated from the proenzyme in this reaction, and the pyruvate is formed at the N-terminus of the alpha chain, which is derived from the carboxyl end of the proenzyme. The post-translation cleavage follows an unusual pathway, termed non-hydrolytic serinolysis, in which the side chain hydroxyl group of the serine supplies its oxygen atom to form the C-terminus of the beta chain, while the remainder of the serine residue undergoes an oxidative deamination to produce ammonia and the pyruvoyl group blocking the N-terminus of the alpha chain.

It carries out the reaction S-adenosyl-L-methionine + H(+) = S-adenosyl 3-(methylsulfanyl)propylamine + CO2. It functions in the pathway amine and polyamine biosynthesis; S-adenosylmethioninamine biosynthesis; S-adenosylmethioninamine from S-adenosyl-L-methionine: step 1/1. Functionally, catalyzes the decarboxylation of S-adenosylmethionine to S-adenosylmethioninamine (dcAdoMet), the propylamine donor required for the synthesis of the polyamines spermine and spermidine from the diamine putrescine. This chain is S-adenosylmethionine decarboxylase proenzyme, found in Citrobacter koseri (strain ATCC BAA-895 / CDC 4225-83 / SGSC4696).